Reading from the N-terminus, the 306-residue chain is Phenylcoumaran benzylic ether reductase POP1 (306 aa).

Residues 9–15 (GGTGYIG), Arg34, and Lys43 contribute to the NADP(+) site. The active-site Proton acceptor is the Lys131. Arg135 provides a ligand contact to NADP(+).

The protein belongs to the NmrA-type oxidoreductase family. Isoflavone reductase subfamily.

It carries out the reaction (-)-dehydrodiconiferyl alcohol + NADPH + H(+) = (S)-isodihydrodehydrodiconiferyl alcohol + NADP(+). The enzyme catalyses (+)-dehydrodiconiferyl alcohol + NADPH + H(+) = (R)-isodihydrodehydrodiconiferyl alcohol + NADP(+). It catalyses the reaction (2R,3S)-dihydrodehydrodiconiferyl alcohol + NADPH + H(+) = (S)-tetrahydrodehydrodiconiferyl alcohol + NADP(+). The catalysed reaction is (2S,3R)-dihydrodehydrodiconiferyl alcohol + NADPH + H(+) = (R)-tetrahydrodehydrodiconiferyl alcohol + NADP(+). Functionally, oxidoreductase involved in lignan biosynthesis. Catalyzes the NADPH-dependent reduction of phenylcoumaran benzylic ethers. Converts dehydrodiconiferyl alcohol (DDC) to isodihydrodehydrodiconiferyl alcohol (IDDDC), and dihydrodehydrodiconiferyl alcohol (DDDC) to tetrahydrodehydrodiconiferyl alcohol (TDDC). The sequence is that of Phenylcoumaran benzylic ether reductase POP1 from Populus trichocarpa (Western balsam poplar).